A 76-amino-acid chain; its full sequence is Kappa-actitoxin-Avd4a (76 aa).

The N-terminal stretch at 1–19 (MNKALFLCLVVLCAAVVFA) is a signal peptide. The propeptide occupies 20 to 31 (AEDLQKAKHAPF). Disulfide bonds link Cys-37–Cys-72, Cys-39–Cys-65, and Cys-55–Cys-73.

Belongs to the sea anemone type 3 (BDS) potassium channel toxin family. As to expression, highly expressed in the ectodermal tissue from the distal and proximal tentacles, body wall, and oral disk.

It is found in the secreted. The protein resides in the nematocyst. Acts as a gating modifier on both Kv and Nav ion channels, and also acts on blood pressure. Voltage-dependently inhibits voltage-gated potassium channels Kv3 (Kv3.1/KCNC1, Kv3.2/KCNC2 and Kv3.4/KCNC4) and slows inactivation of the voltage-gated sodium channel Nav1.7/SCN9A. Inhibits all Kv3.1, Kv3.2 and Kv3.4 by about 50% when tested at a voltage of +40 mV (45%, 48% and 56%, respectively). May act by binding residues in voltage-sensing domains S3b and S4 of Kv3. On sodium channels, tests have been done on human Nav1.7/SCN9A (expressed in HEK293 cells) (EC(50)=3 nM) and rat SCG neurons that mostly carry Nav1.7 channels (EC(50)=300 nM). This toxin also reduces blood pressure. The sequence is that of Kappa-actitoxin-Avd4a from Anemonia viridis (Snakelocks anemone).